An 82-amino-acid polypeptide reads, in one-letter code: Putative membrane protein insertion efficiency factor (82 aa).

Belongs to the UPF0161 family.

It is found in the cell inner membrane. Could be involved in insertion of integral membrane proteins into the membrane. The polypeptide is Putative membrane protein insertion efficiency factor (Rickettsia massiliae (strain Mtu5)).